A 380-amino-acid chain; its full sequence is N-acetylcysteine deacetylase (380 aa).

Ni(2+) contacts are provided by Cys98, His100, Glu134, His158, and His350.

It belongs to the peptidase M20 family. It depends on a divalent metal cation as a cofactor.

The catalysed reaction is N-acetyl-L-cysteine + H2O = L-cysteine + acetate. It participates in amino-acid biosynthesis; L-cysteine biosynthesis. In terms of biological role, probably catalyzes the deacetylation of N-acetylcysteine (NAC) to acetate and cysteine. Is involved in a S-(2-succino)cysteine (2SC) degradation pathway that allows B.subtilis to grow on 2SC as a sole sulfur source, via its metabolization to cysteine. The polypeptide is N-acetylcysteine deacetylase (Bacillus subtilis (strain 168)).